Here is a 397-residue protein sequence, read N- to C-terminus: MSKIIAINAGSSSLKFQLFEMPSEKVLTKGLVERIGLEDSIFTITVNGEKQKEITNIPDHAVAVNMLLNKLTENGIVKSLDEISGIGHRVVHGGEKFADSVLITDQVLADIEDLSELAPLHNPANIVGIKAFQEVLPNVPAVAVFDTAFHQTMPESAYLYSLPYEYYEKYGIRKYGFHGTSHKYVTERAAELLGRPLESLRLLSCHLGNGASIAAVEGGKSIDTSMGFTPLAGVTMGTRSGNIDPALIPYIMEKTGQSVEEVVNVLNKKSGMLGLTGYSSDLRDIIAKEEEGDHRAKVALDVFVSRIHKYIGSYAARMKGVDAIIFTAGIGENSAIIRERVLEGLEYMGVYFDAKRNNVFGEEAFISFPHSPVKIIVIPTDEEVMIARDVVRLGNVG.

N8 is a binding site for Mg(2+). K15 is an ATP binding site. R89 serves as a coordination point for substrate. The active-site Proton donor/acceptor is the D146. Residues 206–210 (HLGNG), 281–283 (DLR), and 329–333 (GIGEN) each bind ATP. Residue E382 participates in Mg(2+) binding.

It belongs to the acetokinase family. As to quaternary structure, homodimer. The cofactor is Mg(2+). It depends on Mn(2+) as a cofactor.

Its subcellular location is the cytoplasm. The enzyme catalyses acetate + ATP = acetyl phosphate + ADP. It participates in metabolic intermediate biosynthesis; acetyl-CoA biosynthesis; acetyl-CoA from acetate: step 1/2. In terms of biological role, catalyzes the formation of acetyl phosphate from acetate and ATP. Can also catalyze the reverse reaction. The sequence is that of Acetate kinase from Bacillus cytotoxicus (strain DSM 22905 / CIP 110041 / 391-98 / NVH 391-98).